Reading from the N-terminus, the 285-residue chain is MSILQLVLIALMQGITEWLPISSSAHVMLVSDVVGLAGRDELLINAASNAGTLLAMLLYFRKDVAAAIAGGFELLGAPVTRKPLSAGGRLALCILVATPFALAGAVIYENFIPENIWTALRSVYAVAASTIVFGALLWWADARGGQSRSEGDMTLRDAFLIGASQLVAVIIPGTSRSGITMTAARALGYERVEAARFSMLIGAPILAAVSLYGLLGLATTPADGMGASLTDGLIVAALAFVSGYASIGLLMALLRKMSFLPFVLYRFALGIALLATSPIVAGAMG.

A run of 7 helical transmembrane segments spans residues 40-60, 92-112, 122-142, 159-179, 197-217, 233-253, and 259-279; these read DELL…LLYF, LCIL…ENFI, SVYA…WADA, FLIG…RSGI, FSML…LLGL, LIVA…LMAL, and FLPF…TSPI.

The protein belongs to the UppP family.

The protein localises to the cell inner membrane. The enzyme catalyses di-trans,octa-cis-undecaprenyl diphosphate + H2O = di-trans,octa-cis-undecaprenyl phosphate + phosphate + H(+). In terms of biological role, catalyzes the dephosphorylation of undecaprenyl diphosphate (UPP). Confers resistance to bacitracin. This Hyphomonas neptunium (strain ATCC 15444) protein is Undecaprenyl-diphosphatase.